The following is a 152-amino-acid chain: D-erythrulose-4-phosphate isomerase 2 (152 aa).

The Proton acceptor role is filled by cysteine 70.

The protein belongs to the LacAB/RpiB family.

The catalysed reaction is D-erythrulose 4-phosphate = D-erythrose 4-phosphate. It functions in the pathway carbohydrate metabolism; erythritol degradation. The protein operates within carbohydrate metabolism; D-threitol degradation. It participates in carbohydrate metabolism; L-threitol degradation. Functionally, catalyzes the isomerization of D-erythrulose-4P to D-erythrose-4P. Involved in the degradation pathways of L-threitol, D-threitol and erythritol, that allow M.smegmatis to grow on these compounds as the sole carbon source. This Mycolicibacterium smegmatis (strain ATCC 700084 / mc(2)155) (Mycobacterium smegmatis) protein is D-erythrulose-4-phosphate isomerase 2.